The chain runs to 61 residues: Small ribosomal subunit protein uS14 (61 aa).

Residues Cys-24, Cys-27, Cys-40, and Cys-43 each contribute to the Zn(2+) site.

This sequence belongs to the universal ribosomal protein uS14 family. Zinc-binding uS14 subfamily. As to quaternary structure, part of the 30S ribosomal subunit. Contacts proteins S3 and S10. Zn(2+) serves as cofactor.

Its function is as follows. Binds 16S rRNA, required for the assembly of 30S particles and may also be responsible for determining the conformation of the 16S rRNA at the A site. This chain is Small ribosomal subunit protein uS14, found in Heliobacterium modesticaldum (strain ATCC 51547 / Ice1).